The primary structure comprises 208 residues: Uracil phosphoribosyltransferase (208 aa).

5-phospho-alpha-D-ribose 1-diphosphate is bound by residues Arg-78, Arg-103, and 130-138 (DPMLATGGS). Uracil-binding positions include Ile-193 and 198 to 200 (GDA). Asp-199 contributes to the 5-phospho-alpha-D-ribose 1-diphosphate binding site.

This sequence belongs to the UPRTase family. It depends on Mg(2+) as a cofactor.

The catalysed reaction is UMP + diphosphate = 5-phospho-alpha-D-ribose 1-diphosphate + uracil. The protein operates within pyrimidine metabolism; UMP biosynthesis via salvage pathway; UMP from uracil: step 1/1. With respect to regulation, allosterically activated by GTP. Its function is as follows. Catalyzes the conversion of uracil and 5-phospho-alpha-D-ribose 1-diphosphate (PRPP) to UMP and diphosphate. The sequence is that of Uracil phosphoribosyltransferase from Vibrio parahaemolyticus serotype O3:K6 (strain RIMD 2210633).